We begin with the raw amino-acid sequence, 348 residues long: MQSPTNGVSTPKDFSSARRSIQFQNTGFPQIGLASARRHTPFHHAPSKRRIPQTSPLSETVDPLKIALLLSKQWTLYSVTPMHKFSYTNLKEYARLLSAHICAEKQKGLAVEVGTELNVKATFSPLPGLKGREQDPGSILIQVLAKPQFSAAGAQDRIVWSGCFCCTFADEDTLDLLTSETLLCLPLFLVNGAEALTAMVGTWFQKAFDCSFSNLPISSRDLAWMAAMWTGYEAHEHITATEFIFSVPIEPHMDISYAIHPEDIKALWSNIHKGQDEVLAEEVDLLFQCLYTHFFRHFKIHLSATHLVKVSTSVASAHCDGKVKFLSKEYLLQVLGYLTELAINNIQY.

Belongs to the CENP-L/IML3 family.

The protein localises to the nucleus. It is found in the chromosome. It localises to the centromere. Functionally, probable component of a centromeric complex involved in assembly of kinetochore proteins, mitotic progression and chromosome segregation. The protein is Centromere protein L (cenpl) of Xenopus tropicalis (Western clawed frog).